A 360-amino-acid chain; its full sequence is Outer membrane protein P2 (360 aa).

Positions 1–20 (MKKTLAALIVGAFAASAANA) are cleaved as a signal peptide.

This sequence belongs to the Gram-negative porin family. In terms of assembly, homotrimer.

Its subcellular location is the cell outer membrane. Functionally, forms pores that allow passive diffusion of small molecules across the outer membrane. The chain is Outer membrane protein P2 (ompP2) from Haemophilus influenzae.